The sequence spans 373 residues: Glycerol-3-phosphate dehydrogenase [NAD(+)] 2 (373 aa).

Serine 15 carries the phosphoserine modification. Residues 31 to 36, phenylalanine 123, lysine 146, and alanine 179 contribute to the NAD(+) site; that span reads GSGNWG. Substrate is bound at residue lysine 146. Lysine 236 acts as the Proton acceptor in catalysis. NAD(+) contacts are provided by arginine 300 and glutamine 329. 300 to 301 serves as a coordination point for substrate; the sequence is RN.

It belongs to the NAD-dependent glycerol-3-phosphate dehydrogenase family.

The protein resides in the cytoplasm. The enzyme catalyses sn-glycerol 3-phosphate + NAD(+) = dihydroxyacetone phosphate + NADH + H(+). The chain is Glycerol-3-phosphate dehydrogenase [NAD(+)] 2 (gpd2) from Schizosaccharomyces pombe (strain 972 / ATCC 24843) (Fission yeast).